The following is a 101-amino-acid chain: Urease subunit beta (101 aa).

This sequence belongs to the urease beta subunit family. In terms of assembly, heterotrimer of UreA (gamma), UreB (beta) and UreC (alpha) subunits. Three heterotrimers associate to form the active enzyme.

Its subcellular location is the cytoplasm. The enzyme catalyses urea + 2 H2O + H(+) = hydrogencarbonate + 2 NH4(+). It functions in the pathway nitrogen metabolism; urea degradation; CO(2) and NH(3) from urea (urease route): step 1/1. In Actinobacillus pleuropneumoniae serotype 5b (strain L20), this protein is Urease subunit beta.